A 379-amino-acid polypeptide reads, in one-letter code: tRNA-specific 2-thiouridylase MnmA (379 aa).

Residues 6 to 13 (AMSGGVDS) and L32 contribute to the ATP site. Residue C101 is the Nucleophile of the active site. C101 and C199 form a disulfide bridge. G125 is an ATP binding site. The tract at residues 148-150 (KDQ) is interaction with tRNA. C199 serves as the catalytic Cysteine persulfide intermediate.

Belongs to the MnmA/TRMU family.

It is found in the cytoplasm. It catalyses the reaction S-sulfanyl-L-cysteinyl-[protein] + uridine(34) in tRNA + AH2 + ATP = 2-thiouridine(34) in tRNA + L-cysteinyl-[protein] + A + AMP + diphosphate + H(+). Its function is as follows. Catalyzes the 2-thiolation of uridine at the wobble position (U34) of tRNA, leading to the formation of s(2)U34. This chain is tRNA-specific 2-thiouridylase MnmA, found in Paenarthrobacter aurescens (strain TC1).